The primary structure comprises 319 residues: NADH-cytochrome b5 reductase 2 (319 aa).

Residues L30–L46 form a helical membrane-spanning segment. Residues Q69–E173 form the FAD-binding FR-type domain. FAD is bound at residue K176 to L211.

The protein belongs to the flavoprotein pyridine nucleotide cytochrome reductase family. Requires FAD as cofactor.

The protein resides in the mitochondrion outer membrane. It carries out the reaction 2 Fe(III)-[cytochrome b5] + NADH = 2 Fe(II)-[cytochrome b5] + NAD(+) + H(+). In terms of biological role, may mediate the reduction of outer membrane cytochrome b5. This Aspergillus terreus (strain NIH 2624 / FGSC A1156) protein is NADH-cytochrome b5 reductase 2 (mcr1).